Reading from the N-terminus, the 160-residue chain is uncharacterized protein (160 aa).

The N-acetyltransferase domain maps to 5–160 (ISLSFYKPEH…GEQLILHHFL (156 aa)).

This is an uncharacterized protein from Bacillus subtilis (strain 168).